The primary structure comprises 167 residues: Photosystem I assembly protein Ycf3 (167 aa).

TPR repeat units follow at residues Ala35–Ala68, Ser72–Leu105, and Gly120–Asn153.

This sequence belongs to the Ycf3 family.

Its subcellular location is the plastid. The protein localises to the chloroplast thylakoid membrane. Functionally, essential for the assembly of the photosystem I (PSI) complex. May act as a chaperone-like factor to guide the assembly of the PSI subunits. This chain is Photosystem I assembly protein Ycf3, found in Chlorella vulgaris (Green alga).